Here is a 328-residue protein sequence, read N- to C-terminus: DNA polymerase IV (328 aa).

One can recognise a UmuC domain in the interval 6–187 (IIHIDMDYFF…LDIGDFPGVG (182 aa)). D10 and D105 together coordinate Mg(2+). Residue E106 is part of the active site.

This sequence belongs to the DNA polymerase type-Y family. As to quaternary structure, monomer. It depends on Mg(2+) as a cofactor.

The protein localises to the cytoplasm. The enzyme catalyses DNA(n) + a 2'-deoxyribonucleoside 5'-triphosphate = DNA(n+1) + diphosphate. Its function is as follows. Poorly processive, error-prone DNA polymerase involved in untargeted mutagenesis. Copies undamaged DNA at stalled replication forks, which arise in vivo from mismatched or misaligned primer ends. These misaligned primers can be extended by PolIV. Exhibits no 3'-5' exonuclease (proofreading) activity. May be involved in translesional synthesis, in conjunction with the beta clamp from PolIII. This is DNA polymerase IV from Staphylococcus aureus (strain bovine RF122 / ET3-1).